The chain runs to 449 residues: UPF0761 membrane protein Cpha266_1653 (449 aa).

A run of 6 helical transmembrane segments spans residues 77-97 (LLSL…FPVF), 133-153 (SVPL…ISTI), 173-193 (FTLY…SLVA), 214-234 (LLSF…YMLV), 244-264 (AVYG…WFVF), and 277-297 (GALS…VVVL).

The protein belongs to the UPF0761 family.

The protein resides in the cell inner membrane. This is UPF0761 membrane protein Cpha266_1653 from Chlorobium phaeobacteroides (strain DSM 266 / SMG 266 / 2430).